The primary structure comprises 491 residues: Nucleotidyltransferase MB21D2 (491 aa).

Positions 431–442 (RGSTTSIPSPQS) are enriched in polar residues. A disordered region spans residues 431–452 (RGSTTSIPSPQSDGGDPNQPDD). At threonine 435 the chain carries Phosphothreonine. A phosphoserine mark is found at serine 436, serine 439, and serine 442.

It belongs to the mab-21 family.

Functionally, probable nucleotidyltransferase that catalyzes the formation of cyclic dinucleotide second messenger in response to some unknown stimulus. The chain is Nucleotidyltransferase MB21D2 from Homo sapiens (Human).